Here is a 327-residue protein sequence, read N- to C-terminus: MEAIKGSDVNVPDAVFAWMLDGRGGVKPLENTDVIDEAHPCWLHLNYVHHDSAQWLATTPLLPNNVRDALAGESTRPRVSRLGEGTLITLRCINGSTDERPDQLVAMRVYMDGRLIVSTRQRKVLALDDVVSDLEEGTGPTDCGGWLVDVCDALTDHSSEFIEQLHDKIIDLEDNLLDQQIPPRGFLALLRKQLIVMRRYMAPQRDVYARLASERLPWMSDDQRRRMQDIADRLGRGLDEIDACIARTGVMADEIAQVMQENLARRTYTMSLMAMVFLPSTFLTGLFGVNLGGIPGGGWQFGFSIFCILLVVLIGGVALWLHRSKWL.

Topologically, residues 1-273 (MEAIKGSDVN…ARRTYTMSLM (273 aa)) are cytoplasmic. A helical transmembrane segment spans residues 274–294 (AMVFLPSTFLTGLFGVNLGGI). At 295-300 (PGGGWQ) the chain is on the periplasmic side. A helical transmembrane segment spans residues 301–321 (FGFSIFCILLVVLIGGVALWL). The Cytoplasmic segment spans residues 322–327 (HRSKWL).

It belongs to the CorA metal ion transporter (MIT) (TC 1.A.35) family.

It is found in the cell inner membrane. The enzyme catalyses Zn(2+)(out) + H(+)(out) = Zn(2+)(in) + H(+)(in). Its function is as follows. Zinc transporter. Acts as a Zn(2+):proton symporter, which likely mediates zinc ion uptake. The chain is Zinc transport protein ZntB from Escherichia coli O139:H28 (strain E24377A / ETEC).